The sequence spans 455 residues: Argininosuccinate lyase (455 aa).

It belongs to the lyase 1 family. Argininosuccinate lyase subfamily.

Its subcellular location is the cytoplasm. It carries out the reaction 2-(N(omega)-L-arginino)succinate = fumarate + L-arginine. It participates in amino-acid biosynthesis; L-arginine biosynthesis; L-arginine from L-ornithine and carbamoyl phosphate: step 3/3. The chain is Argininosuccinate lyase from Caulobacter vibrioides (strain ATCC 19089 / CIP 103742 / CB 15) (Caulobacter crescentus).